The sequence spans 524 residues: Glycoprotein (524 aa).

Residues 1–19 (MVPQVLLFVPLLVFSMCFG) form the signal peptide. The Virion surface portion of the chain corresponds to 20–459 (KFPIYTIPDK…DLGLPSWGKY (440 aa)). Disulfide bonds link Cys43-Cys302, Cys54-Cys226, Cys80-Cys113, Cys178-Cys188, Cys208-Cys247, and Cys242-Cys271. The N-linked (GlcNAc...) asparagine; by host glycan is linked to Asn56. The N-linked (GlcNAc...) asparagine; by host glycan is linked to Asn338. Cys363 and Cys370 are joined by a disulfide. Residues 460-480 (VLVSAGVLVVLMLTIFIMTCC) form a helical membrane-spanning segment. Cys480 carries the S-palmitoyl cysteine; by host lipid modification. Over 481–524 (GRVHRPKSTQHGLGGTGRKVSVTSQSGKVISSWESYKSGGETRL) the chain is Intravirion.

Belongs to the lyssavirus glycoprotein family. Homotrimer. Interacts with matrix protein. Interacts with host TRFC. Interacts with host BST2; this interaction inhibits viral budding by tethering new virions to the cell surface. Interacts with ITGB1. Interacts with host GRM2. Post-translationally, glycosylated and palmitoylated by host. Glycosylation is crucial for glycoprotein export at the cell surface.

The protein resides in the virion membrane. Functionally, attaches the virus to host cellular receptor, inducing endocytosis of the virion by using different host proteins including TFRC, GRM2 and ITGB1. In the endosome, the acidic pH induces conformational changes in the glycoprotein trimer, which trigger fusion between virus and cell membrane. There is convincing in vitro evidence that the muscular form of the nicotinic acetylcholine receptor (nAChR), the neuronal cell adhesion molecule (NCAM), and the p75 neurotrophin receptor (p75NTR) bind glycoprotein and thereby facilitate rabies virus entry into cells. The chain is Glycoprotein (G) from Homo sapiens (Human).